A 443-amino-acid polypeptide reads, in one-letter code: Leucine/methionine racemase (443 aa).

Residues Gly-110–Ser-111 and Gln-247 each bind pyridoxal 5'-phosphate. Lys-273 carries the N6-(pyridoxal phosphate)lysine modification. Thr-302 is a pyridoxal 5'-phosphate binding site.

The protein belongs to the class-III pyridoxal-phosphate-dependent aminotransferase family. Requires pyridoxal 5'-phosphate as cofactor.

It carries out the reaction L-leucine = D-leucine. The enzyme catalyses L-methionine = D-methionine. Its activity is regulated as follows. Activity is strongly inhibited by several metal ions, including Co(2+), Zn(2+), Ni(2+), Cu(2+) and Fe(3+), and nonsubstrate amino acids such as L-arginine and L-lysine. Activity is completely abolished in the presence of hydroxylamine, an inhibitor of pyridoxal phosphate-dependent enzymes. Amino acid racemase with moderate substrate specificity. Is primarily active toward leucine, which is the preferred substrate, and methionine. Also exhibits lower levels of activity toward phenylalanine, alanine and serine. This is Leucine/methionine racemase from Thermococcus litoralis (strain ATCC 51850 / DSM 5473 / JCM 8560 / NS-C).